Here is a 129-residue protein sequence, read N- to C-terminus: Phosphoribosyl-AMP cyclohydrolase (129 aa).

A Mg(2+)-binding site is contributed by Asp-85. Cys-86 lines the Zn(2+) pocket. Mg(2+)-binding residues include Asp-87 and Asp-89. Residues Cys-102 and Cys-109 each contribute to the Zn(2+) site.

The protein belongs to the PRA-CH family. Homodimer. The cofactor is Mg(2+). Zn(2+) serves as cofactor.

It localises to the cytoplasm. The catalysed reaction is 1-(5-phospho-beta-D-ribosyl)-5'-AMP + H2O = 1-(5-phospho-beta-D-ribosyl)-5-[(5-phospho-beta-D-ribosylamino)methylideneamino]imidazole-4-carboxamide. It functions in the pathway amino-acid biosynthesis; L-histidine biosynthesis; L-histidine from 5-phospho-alpha-D-ribose 1-diphosphate: step 3/9. Functionally, catalyzes the hydrolysis of the adenine ring of phosphoribosyl-AMP. The chain is Phosphoribosyl-AMP cyclohydrolase from Methanococcus maripaludis (strain C5 / ATCC BAA-1333).